Here is a 238-residue protein sequence, read N- to C-terminus: tRNA1(Val) (adenine(37)-N6)-methyltransferase (238 aa).

It belongs to the methyltransferase superfamily. tRNA (adenine-N(6)-)-methyltransferase family.

It localises to the cytoplasm. The enzyme catalyses adenosine(37) in tRNA1(Val) + S-adenosyl-L-methionine = N(6)-methyladenosine(37) in tRNA1(Val) + S-adenosyl-L-homocysteine + H(+). Its function is as follows. Specifically methylates the adenine in position 37 of tRNA(1)(Val) (anticodon cmo5UAC). The polypeptide is tRNA1(Val) (adenine(37)-N6)-methyltransferase (Shewanella putrefaciens (strain CN-32 / ATCC BAA-453)).